Here is a 678-residue protein sequence, read N- to C-terminus: Glutamate--cysteine ligase (678 aa).

This sequence belongs to the glutamate--cysteine ligase type 3 family.

The enzyme catalyses L-cysteine + L-glutamate + ATP = gamma-L-glutamyl-L-cysteine + ADP + phosphate + H(+). Its pathway is sulfur metabolism; glutathione biosynthesis; glutathione from L-cysteine and L-glutamate: step 1/2. Its activity is regulated as follows. Feedback inhibition by glutathione. Functionally, catalyzes the ATP-dependent condensation of cysteine and glutamate to form the dipeptide gamma-glutamylcysteine (gamma-GC), the first and rate-limiting step in the production of glutathione (GSH). The protein is Glutamate--cysteine ligase (GSH1) of Saccharomyces cerevisiae (strain ATCC 204508 / S288c) (Baker's yeast).